We begin with the raw amino-acid sequence, 438 residues long: ATP synthase subunit alpha, chloroplastic (438 aa).

Gly170–Thr177 contacts ATP.

The protein belongs to the ATPase alpha/beta chains family. In terms of assembly, F-type ATPases have 2 components, CF(1) - the catalytic core - and CF(0) - the membrane proton channel. CF(1) has five subunits: alpha(3), beta(3), gamma(1), delta(1), epsilon(1). CF(0) has four main subunits: a, b, b' and c.

It localises to the plastid. Its subcellular location is the chloroplast thylakoid membrane. The enzyme catalyses ATP + H2O + 4 H(+)(in) = ADP + phosphate + 5 H(+)(out). Produces ATP from ADP in the presence of a proton gradient across the membrane. The alpha chain is a regulatory subunit. The sequence is that of ATP synthase subunit alpha, chloroplastic from Ochrosphaera neapolitana.